Reading from the N-terminus, the 291-residue chain is ATP synthase gamma chain (291 aa).

This sequence belongs to the ATPase gamma chain family. F-type ATPases have 2 components, CF(1) - the catalytic core - and CF(0) - the membrane proton channel. CF(1) has five subunits: alpha(3), beta(3), gamma(1), delta(1), epsilon(1). CF(0) has three main subunits: a, b and c.

Its subcellular location is the cell inner membrane. In terms of biological role, produces ATP from ADP in the presence of a proton gradient across the membrane. The gamma chain is believed to be important in regulating ATPase activity and the flow of protons through the CF(0) complex. The protein is ATP synthase gamma chain of Xanthobacter autotrophicus (strain ATCC BAA-1158 / Py2).